A 559-amino-acid polypeptide reads, in one-letter code: N-acetylglucosamine-6-sulfatase (559 aa).

Residues 1–26 (MRFLSLAPDRPRRGGPRHLPSGSPAP) form a disordered region. Positions 1–47 (MRFLSLAPDRPRRGGPRHLPSGSPAPPPPPPLLLLLLLGGCLGVSGA) are cleaved as a signal peptide. Positions 62, 63, and 98 each coordinate Ca(2+). Cys-98 (nucleophile) is an active-site residue. The residue at position 98 (Cys-98) is a 3-oxoalanine (Cys). Asn-118, Asn-124, Asn-190, Asn-205, Asn-217, Asn-286, and Asn-324 each carry an N-linked (GlcNAc...) asparagine glycan. Ca(2+) is bound by residues Asp-333 and Asn-334. N-linked (GlcNAc...) asparagine glycans are attached at residues Asn-369, Asn-394, Asn-412, Asn-429, Asn-456, and Asn-487. Phosphoserine is present on Ser-548.

The protein belongs to the sulfatase family. The cofactor is Ca(2+). Post-translationally, processed by internal peptidase. The conversion to 3-oxoalanine (also known as C-formylglycine, FGly), of a serine or cysteine residue in prokaryotes and of a cysteine residue in eukaryotes, is critical for catalytic activity.

Its subcellular location is the lysosome. The enzyme catalyses Hydrolysis of the 6-sulfate groups of the N-acetyl-D-glucosamine 6-sulfate units of heparan sulfate and keratan sulfate.. Functionally, hydrolyzes 6-sulfate groups in N-acetyl-d-glucosaminide units of heparin sulfate and keratan sulfate. The protein is N-acetylglucosamine-6-sulfatase (GNS) of Capra hircus (Goat).